A 37-amino-acid polypeptide reads, in one-letter code: Cytochrome b6-f complex subunit 5 (37 aa).

Residues 5–25 (LLSGIVLGLVPITITGLLVTA) form a helical membrane-spanning segment.

It belongs to the PetG family. As to quaternary structure, the 4 large subunits of the cytochrome b6-f complex are cytochrome b6, subunit IV (17 kDa polypeptide, PetD), cytochrome f and the Rieske protein, while the 4 small subunits are PetG, PetL, PetM and PetN. The complex functions as a dimer.

The protein resides in the plastid. Its subcellular location is the chloroplast thylakoid membrane. Component of the cytochrome b6-f complex, which mediates electron transfer between photosystem II (PSII) and photosystem I (PSI), cyclic electron flow around PSI, and state transitions. PetG is required for either the stability or assembly of the cytochrome b6-f complex. This Tupiella akineta (Green alga) protein is Cytochrome b6-f complex subunit 5.